A 432-amino-acid polypeptide reads, in one-letter code: Ribosome biogenesis protein WDR12 homolog (432 aa).

The tract at residues 13–97 (LQIRLVALNK…ESVIEVVYFQ (85 aa)) is ubiquitin-like (UBL) domain. WD repeat units lie at residues 109–146 (LHSDWIKSVRSKDDCILAGSLDGTARIWNMAGEEYAIF), 148–190 (GHES…KSVE), 197–236 (GHTQAVNAVTVNQSKTKICSVSSDKMIKIWSTDCSRKDDD), 265–303 (GHTDGIDAVVWPKEAEIITAGWDHRIKIWDTEVGVNKSD), 305–345 (NVNK…DQTV), 352–392 (SHKN…APLY), and 396–432 (GHEDKVLAVDWSEPQYIVSGGADNRIQIYQREVAQRS).

The protein belongs to the WD repeat WDR12/YTM1 family.

It is found in the nucleus. It localises to the nucleolus. Its subcellular location is the nucleoplasm. In terms of biological role, required for maturation of ribosomal RNAs and formation of the large ribosomal subunit. The chain is Ribosome biogenesis protein WDR12 homolog from Trichoplax adhaerens (Trichoplax reptans).